The primary structure comprises 602 residues: DNA mismatch repair protein MutL (602 aa).

The segment at 337 to 367 is disordered; it reads KRPFPGSSTNYSGIQQDTKKQESDNPEKARG. The span at 342–352 shows a compositional bias: polar residues; sequence GSSTNYSGIQQ. Residues 353–367 show a composition bias toward basic and acidic residues; the sequence is DTKKQESDNPEKARG.

It belongs to the DNA mismatch repair MutL/HexB family.

In terms of biological role, this protein is involved in the repair of mismatches in DNA. It is required for dam-dependent methyl-directed DNA mismatch repair. May act as a 'molecular matchmaker', a protein that promotes the formation of a stable complex between two or more DNA-binding proteins in an ATP-dependent manner without itself being part of a final effector complex. In Kosmotoga olearia (strain ATCC BAA-1733 / DSM 21960 / TBF 19.5.1), this protein is DNA mismatch repair protein MutL.